The primary structure comprises 564 residues: E3 ubiquitin-protein ligase hrd-like protein 1 (564 aa).

The helical transmembrane segment at 17-37 (SYLALSVLVAIVASVTVFTTF) threads the bilayer. The N-linked (GlcNAc...) asparagine glycan is linked to N53. 7 helical membrane-spanning segments follow: residues 61–81 (YGLNIEALSGHTFFQIAHYIL), 86–106 (LIWVAINSYFAILAVCTRLII), 123–143 (QAFFCYVLLTIVYLSVVIGPQ), 148–168 (VMPWMIWGGICAFLSHLQFIT), 185–205 (KISFLSLFLFFVSIAMTFLIS), 215–235 (PAVLLYFDCLLAVFRSTYILF), and 272–292 (LSFAQLLAFSPGLNLTSIFFL). The RING-type; atypical zinc finger occupies 335–373 (CVVCWELLGTSRRLPCSHQFHDWCLMWWLAQDSSCPTCR). The CUE domain occupies 432 to 474 (QLQTMLEQVREMFPQMSVDIIMTDLRQSGSAQSTIENILEGRI).

The protein resides in the membrane. Proposed to have a role in neuroprotection. The chain is E3 ubiquitin-protein ligase hrd-like protein 1 (hrdl-1) from Caenorhabditis elegans.